Reading from the N-terminus, the 319-residue chain is uncharacterized protein (319 aa).

Over residues 268–312 (SSVVAVTHPPSTTSTTTSVSETLSSFIAPSDLSSQPSPSSHPSSP) the composition is skewed to low complexity. The segment at 268-319 (SSVVAVTHPPSTTSTTTSVSETLSSFIAPSDLSSQPSPSSHPSSPFGNHNEF) is disordered.

This is an uncharacterized protein from Lepidoptera (butterflies and moths).